A 389-amino-acid chain; its full sequence is Succinate--CoA ligase [ADP-forming] subunit beta (389 aa).

The ATP-grasp domain maps to 9–236; that stretch reads KELFASHGVP…KDAEDPLEAK (228 aa). Residues Lys-45, 52-54, Ser-94, and Glu-99 contribute to the ATP site; that span reads GRG. The Mg(2+) site is built by Asn-191 and Asp-205. Residues Asn-256 and 318–320 each bind substrate; that span reads GIT.

It belongs to the succinate/malate CoA ligase beta subunit family. Heterotetramer of two alpha and two beta subunits. Mg(2+) serves as cofactor.

It catalyses the reaction succinate + ATP + CoA = succinyl-CoA + ADP + phosphate. The catalysed reaction is GTP + succinate + CoA = succinyl-CoA + GDP + phosphate. It participates in carbohydrate metabolism; tricarboxylic acid cycle; succinate from succinyl-CoA (ligase route): step 1/1. Succinyl-CoA synthetase functions in the citric acid cycle (TCA), coupling the hydrolysis of succinyl-CoA to the synthesis of either ATP or GTP and thus represents the only step of substrate-level phosphorylation in the TCA. The beta subunit provides nucleotide specificity of the enzyme and binds the substrate succinate, while the binding sites for coenzyme A and phosphate are found in the alpha subunit. This Saccharopolyspora erythraea (strain ATCC 11635 / DSM 40517 / JCM 4748 / NBRC 13426 / NCIMB 8594 / NRRL 2338) protein is Succinate--CoA ligase [ADP-forming] subunit beta.